The following is a 139-amino-acid chain: Putative pre-16S rRNA nuclease (139 aa).

Belongs to the YqgF nuclease family.

Its subcellular location is the cytoplasm. Functionally, could be a nuclease involved in processing of the 5'-end of pre-16S rRNA. The protein is Putative pre-16S rRNA nuclease of Streptococcus pyogenes serotype M1.